A 239-amino-acid chain; its full sequence is MNPVRTLSATKAAFFSAYPRPINAVYRRVVEELLVELHLTTVNSTFVYDPFFALGLVTLYDGLMEAYHPPEQREAIFNALCKALHLKPEVLRKNARDLLELMGSGDPRQRLDLLCLKPEAEDVGGLKAILERMTQPPYAYSRVLAVGLYTAYEVVAKSLYEEPEERTRRFLENVVSKLPFSTERVRKDLELYRSSLDRMKQARAVVEEMVKAARRQQERRQSAASLPETSLGDPSKPGS.

Residues 183–221 (ERVRKDLELYRSSLDRMKQARAVVEEMVKAARRQQERRQ) adopt a coiled-coil conformation. Over residues 211–221 (KAARRQQERRQ) the composition is skewed to basic and acidic residues. The segment at 211–239 (KAARRQQERRQSAASLPETSLGDPSKPGS) is disordered.

The protein belongs to the THF1 family.

Functionally, may be involved in photosynthetic membrane biogenesis. This Synechococcus sp. (strain JA-2-3B'a(2-13)) (Cyanobacteria bacterium Yellowstone B-Prime) protein is Protein Thf1.